The chain runs to 247 residues: HTH-type transcriptional regulator SarU (247 aa).

2 consecutive DNA-binding regions (H-T-H motif) follow at residues 53–76 (LKEIIGDILYKQSDVVKNIKSLSK) and 178–201 (LKDLFESIRFMYPQIVRSVNRLNN).

The protein belongs to the SarA family.

It is found in the cytoplasm. Its function is as follows. Positive regulator of RNAII and RNAIII in a cell density-dependent manner. It can contribute to the expression of virulence genes controlled by agr. May also regulate target genes via an agr-independent pathway. In Staphylococcus aureus (strain COL), this protein is HTH-type transcriptional regulator SarU (sarU).